Reading from the N-terminus, the 402-residue chain is Protein kinase US3 homolog (402 aa).

2 disordered regions span residues Met-1–Asp-21 and Phe-46–Thr-88. Positions Tyr-102–Phe-386 constitute a Protein kinase domain. Residues Leu-108–Ile-116 and Lys-129 each bind ATP. Asp-218 functions as the Proton acceptor in the catalytic mechanism.

It belongs to the protein kinase superfamily. Ser/Thr protein kinase family. In terms of processing, phosphorylated by UL13 homolog; this phosphorylation regulates subsequent phosphorylation of UL31 and UL34 homologs by US3. Autophosphorylated.

Its subcellular location is the host cytoplasm. The protein localises to the host nucleus. The catalysed reaction is L-seryl-[protein] + ATP = O-phospho-L-seryl-[protein] + ADP + H(+). It catalyses the reaction L-threonyl-[protein] + ATP = O-phospho-L-threonyl-[protein] + ADP + H(+). Its function is as follows. Multifunctional serine/threonine kinase that plays a role in several processes including egress of virus particles from the nucleus, modulation of the actin cytoskeleton and inhibition of apoptosis. Phosphorylates UL31 and UL34 homologs, two critical regulators of capsid budding from nucleus to endoplasmic reticulum, thereby facilitating virion egress. Modulates and redistributes host components of the nuclear envelope, including LMNA, emerin/EMD and the nuclear matrix protein MATR3. Phosphorylates envelope glycoprotein B (gB), probably to direct it to the cell surface. Promotes virus intracellular spread by restructuring host cell cytoskeleton. Blocks host apoptosis to extend cell survival and allow efficient viral replication. Promotes viral gene expression by phosphorylating host HDAC2 to reduce viral genome silencing. This Gallus gallus (Chicken) protein is Protein kinase US3 homolog (MDV092).